The following is a 603-amino-acid chain: Elongation factor 4 (603 aa).

The tr-type G domain maps to 7-191 (DNIRNFSIVA…AIVTRLPPPK (185 aa)). Residues 19-24 (DHGKST) and 138-141 (NKVD) each bind GTP.

It belongs to the TRAFAC class translation factor GTPase superfamily. Classic translation factor GTPase family. LepA subfamily.

The protein resides in the cell inner membrane. The enzyme catalyses GTP + H2O = GDP + phosphate + H(+). Functionally, required for accurate and efficient protein synthesis under certain stress conditions. May act as a fidelity factor of the translation reaction, by catalyzing a one-codon backward translocation of tRNAs on improperly translocated ribosomes. Back-translocation proceeds from a post-translocation (POST) complex to a pre-translocation (PRE) complex, thus giving elongation factor G a second chance to translocate the tRNAs correctly. Binds to ribosomes in a GTP-dependent manner. This chain is Elongation factor 4, found in Rhodopseudomonas palustris (strain ATCC BAA-98 / CGA009).